Here is a 75-residue protein sequence, read N- to C-terminus: DNA-directed RNA polymerase subunit omega (75 aa).

It belongs to the RNA polymerase subunit omega family. In terms of assembly, in cyanobacteria the RNAP catalytic core is composed of 2 alpha, 1 beta, 1 beta', 1 gamma and 1 omega subunit. When a sigma factor is associated with the core the holoenzyme is formed, which can initiate transcription.

The catalysed reaction is RNA(n) + a ribonucleoside 5'-triphosphate = RNA(n+1) + diphosphate. Its function is as follows. Promotes RNA polymerase assembly. Latches the N- and C-terminal regions of the beta' subunit thereby facilitating its interaction with the beta and alpha subunits. The sequence is that of DNA-directed RNA polymerase subunit omega from Synechococcus sp. (strain CC9311).